The following is a 347-amino-acid chain: MVENIIELRDISKHYEELTVLDNFNLDIKKNEFLTLLGPSGCGKTTTLKIIAGFEYADDGKVLFEGKEINNLPPYERQVNTVFQKYALFPHMDVYENVAFGLKIKKTPKDVIDAKVKEVLKLVALEGFERRQVESLSGGQQQRIAIARALVNEPKVLLLDEPLGALDLKLRQEMQIELKRIQKKLGITFVFVTHDQEEALTMSDTIVVMYKGKIQQMGTPQDIYNEPKNSFVAKFIGESNIFDGIMIEDYKVNFCNRDFECVDKGFEKNENIEVVIRPEDIKMVKPEEGMLKGKVTSTVFKGVHYEIELNENGRLWILHNTKNAEVGTELGMDIYPEDIHIMRKENN.

An ABC transporter domain is found at 6–236; that stretch reads IELRDISKHY…PKNSFVAKFI (231 aa). 38-45 is an ATP binding site; the sequence is GPSGCGKT.

This sequence belongs to the ABC transporter superfamily. Spermidine/putrescine importer (TC 3.A.1.11.1) family. As to quaternary structure, the complex is composed of two ATP-binding proteins (PotA), two transmembrane proteins (PotB and PotC) and a solute-binding protein (PotD).

The protein localises to the cell membrane. The catalysed reaction is ATP + H2O + polyamine-[polyamine-binding protein]Side 1 = ADP + phosphate + polyamineSide 2 + [polyamine-binding protein]Side 1.. Functionally, part of the ABC transporter complex PotABCD involved in spermidine/putrescine import. Responsible for energy coupling to the transport system. This chain is Spermidine/putrescine import ATP-binding protein PotA, found in Clostridioides difficile (strain 630) (Peptoclostridium difficile).